A 1181-amino-acid chain; its full sequence is Poly [ADP-ribose] polymerase tankyrase (1181 aa).

18 ANK repeats span residues 56 to 85 (RKST…SIQA), 89 to 118 (GGLH…SPNT), 122 to 151 (WNYT…NHTI), 209 to 238 (RRST…DVHA), 242 to 271 (GGLV…NVNA), 275 to 304 (WAFT…DPTL), 362 to 394 (TGDT…LLNE), 398 to 427 (AFLT…KVNA), 431 to 458 (LGQT…DTNI), 483 to 513 (DSET…SVNC), 519 to 548 (RHST…EVYA), 552 to 581 (GGLV…NVNV), 585 to 614 (WKFT…DPMK), 638 to 668 (RGPS…NCRD), 672 to 701 (RNST…DVNA), 705 to 734 (GGLI…VVNA), 738 to 767 (WGFT…DAYM), and 771 to 799 (EGQT…LSQQ). 2 disordered regions span residues 807-834 (SLTS…SAIL) and 864-886 (RISP…DLLP). An SAM domain is found at 889-952 (DTITNVSGFL…LKGIAQLRST (64 aa)). The region spanning 969 to 1174 (LPDDKEFVAV…YQIVKPDDSS (206 aa)) is the PARP catalytic domain. Positions 1091, 1094, 1099, and 1102 each coordinate Zn(2+).

Belongs to the ARTD/PARP family. Interacts (via ANK repeats) with PI31.

It carries out the reaction NAD(+) + (ADP-D-ribosyl)n-acceptor = nicotinamide + (ADP-D-ribosyl)n+1-acceptor + H(+).. It catalyses the reaction L-aspartyl-[protein] + NAD(+) = 4-O-(ADP-D-ribosyl)-L-aspartyl-[protein] + nicotinamide. The enzyme catalyses L-glutamyl-[protein] + NAD(+) = 5-O-(ADP-D-ribosyl)-L-glutamyl-[protein] + nicotinamide. Its function is as follows. Stimulates proteasome activity, probably by ADP-ribosylation of PI31. Modulates 26S proteasome assembly. The polypeptide is Poly [ADP-ribose] polymerase tankyrase (Drosophila melanogaster (Fruit fly)).